Consider the following 78-residue polypeptide: Chondrosarcoma-associated gene 1 protein (78 aa).

Residues 1–19 form the signal peptide; it reads MSATTACWPAFTVLGEARG. The tract at residues 35–78 is disordered; the sequence is KMSRKPRASSPFSNNHPSTPKRFPRQPRREKGPVKEVPGTKGSP.

In terms of tissue distribution, expressed in chondrosarcoma, melanoma, cartilage and testis, but not in other normal tissues.

The protein localises to the cytoplasm. The protein resides in the cytoskeleton. Its subcellular location is the microtubule organizing center. It is found in the centrosome. It localises to the spindle pole. Its function is as follows. May play an important role in maintaining centrosome integrity during mitosis. This is Chondrosarcoma-associated gene 1 protein from Homo sapiens (Human).